A 305-amino-acid chain; its full sequence is Aurora/IPL1-related protein kinase 2 (305 aa).

Positions 30–280 (FEIGRPLGKG…LEQVKEHYWI (251 aa)) constitute a Protein kinase domain. ATP is bound by residues 36–44 (LGKGKFGSV) and Lys-59. The active-site Proton acceptor is the Asp-153.

The protein belongs to the protein kinase superfamily. Ser/Thr protein kinase family. Aurora subfamily. Component of the CPC complex which consists of icp-1; csc-1; bir-1 and air-2. Within the complex, interacts with icp-1; csc-1 and bir-1. Interacts with zen-4. Interacts with tlk-1 and bmk-1. Post-translationally, phosphorylated. Increased phosphorylation upon chromatin obstructions at anaphase.

Its subcellular location is the cytoplasm. It localises to the cytoskeleton. It is found in the chromosome. The protein resides in the midbody. The protein localises to the spindle. It carries out the reaction L-seryl-[protein] + ATP = O-phospho-L-seryl-[protein] + ADP + H(+). The enzyme catalyses L-threonyl-[protein] + ATP = O-phospho-L-threonyl-[protein] + ADP + H(+). Serine/threonine-protein kinase component of the chromosomal passenger complex (CPC), a complex that acts as a key regulator of chromosome segregation and cytokinesis. The CPC complex has essential functions at the centromere in ensuring correct chromosome alignment and segregation. Required for histone H3 phosphorylation during segregation of homologous chromosomes in meiosis and mitosis. Required for histone H3 'Ser-10' phosphorylation. Phosphorylates tlk-1 at 'Ser-634', which enhances its activity. Phosphorylates zen-4 at 'Ser-680'. Required for the recruitment of bub-1 to the ring-shaped domain between chromosomes during meiotic anaphase I. Also required for the localization of the condensin I complex subunit smc-4 to mitotic chromosomes. Acts at the spindle midzone and the midbody to prevent cleavage furrow regression upon chromatin obstructions during cytokinesis. The sequence is that of Aurora/IPL1-related protein kinase 2 from Caenorhabditis elegans.